Consider the following 156-residue polypeptide: Transcription elongation factor GreA (156 aa).

A coiled-coil region spans residues 2–27 (EKTFPMTKEGLDKLKAELENLKLVKR).

It belongs to the GreA/GreB family.

In terms of biological role, necessary for efficient RNA polymerase transcription elongation past template-encoded arresting sites. The arresting sites in DNA have the property of trapping a certain fraction of elongating RNA polymerases that pass through, resulting in locked ternary complexes. Cleavage of the nascent transcript by cleavage factors such as GreA or GreB allows the resumption of elongation from the new 3'terminus. GreA releases sequences of 2 to 3 nucleotides. The chain is Transcription elongation factor GreA from Lactococcus lactis subsp. cremoris (strain SK11).